The primary structure comprises 331 residues: Beta-hexosaminidase (331 aa).

Residues Asp60, Arg68, Arg133, and 163-164 (KH) contribute to the substrate site. His176 acts as the Proton donor/acceptor in catalysis. Residue Asp247 is the Nucleophile of the active site.

The protein belongs to the glycosyl hydrolase 3 family. NagZ subfamily.

The protein localises to the cytoplasm. It catalyses the reaction Hydrolysis of terminal non-reducing N-acetyl-D-hexosamine residues in N-acetyl-beta-D-hexosaminides.. The protein operates within cell wall biogenesis; peptidoglycan recycling. In terms of biological role, plays a role in peptidoglycan recycling by cleaving the terminal beta-1,4-linked N-acetylglucosamine (GlcNAc) from peptide-linked peptidoglycan fragments, giving rise to free GlcNAc, anhydro-N-acetylmuramic acid and anhydro-N-acetylmuramic acid-linked peptides. The chain is Beta-hexosaminidase from Xanthomonas campestris pv. campestris (strain B100).